A 326-amino-acid polypeptide reads, in one-letter code: Organic solute transporter subunit alpha (326 aa).

The Extracellular portion of the chain corresponds to 1 to 28 (METSNFTLFDPRCRAEAPFAIDAIKQLD). An N-linked (GlcNAc...) asparagine glycan is attached at N5. A helical membrane pass occupies residues 29–49 (IFGKVLYTVLTLMATASMLVF). The Cytoplasmic segment spans residues 50–67 (IEECIYIYKKVPAHKKST). The helical transmembrane segment at 68-88 (IIWVTGVAPVMAIMSCLGMWV) threads the bilayer. Topologically, residues 89–99 (PRATMFTDMTS) are extracellular. A helical membrane pass occupies residues 100 to 120 (ATYFAIVVFKFLILMIEEVGG). At 121 to 161 (DNAFLRRCEKQTFKISTGPCCCCCPCLPNVPITRRSLFILK) the chain is on the cytoplasmic side. Residues 162-182 (LGSYQFALMKLVLTIFSIVLW) traverse the membrane as a helical segment. Topologically, residues 183-198 (TNGSFSLTNVSASGAA) are extracellular. 2 N-linked (GlcNAc...) asparagine glycosylation sites follow: N184 and N191. Residues 199-219 (IWINSFIGVLTIIALWPVAIM) traverse the membrane as a helical segment. Over 220–237 (FMHVREALRTLKIVPKYA) the chain is Cytoplasmic. Residues 238 to 258 (MYQLVLILSQLQTAIINILAL) traverse the membrane as a helical segment. N259 is a glycosylation site (N-linked (GlcNAc...) asparagine). At 259-275 (NGTIACSPPYSSQARGY) the chain is on the extracellular side. A helical membrane pass occupies residues 276-296 (MMSQQLLIVEMFIITLVTRVL). Over 297–326 (YRRQYEPIPEPDDVEEKKTVLSSKKAIDVA) the chain is Cytoplasmic.

The protein belongs to the OST-alpha family. In terms of assembly, interacts with slc51b. The Ost-alpha/Ost-beta complex is a heterodimer composed of alpha (slc51a) and beta (slc51b) subunit.

Its subcellular location is the cell membrane. It is found in the endoplasmic reticulum membrane. It carries out the reaction taurocholate(out) = taurocholate(in). The catalysed reaction is prostaglandin E2(out) = prostaglandin E2(in). The enzyme catalyses estrone 3-sulfate(out) = estrone 3-sulfate(in). It catalyses the reaction dehydroepiandrosterone 3-sulfate(out) = dehydroepiandrosterone 3-sulfate(in). It carries out the reaction tauroursodeoxycholate(out) = tauroursodeoxycholate(in). The catalysed reaction is glycoursodeoxycholate(out) = glycoursodeoxycholate(in). The enzyme catalyses glycocholate(out) = glycocholate(in). It catalyses the reaction taurochenodeoxycholate(out) = taurochenodeoxycholate(in). It carries out the reaction glycochenodeoxycholate(out) = glycochenodeoxycholate(in). The catalysed reaction is taurodeoxycholate(out) = taurodeoxycholate(in). The enzyme catalyses glycodeoxycholate(out) = glycodeoxycholate(in). Essential component of the Ost-alpha/Ost-beta complex, a heterodimer that acts as the intestinal basolateral transporter responsible for the translocation of bile acids (such as taurocholate), steroids (such as estrone sulfate), and eicosanoids (such as prostaglandin E2). This is Organic solute transporter subunit alpha (slc51a) from Danio rerio (Zebrafish).